Here is a 614-residue protein sequence, read N- to C-terminus: Sodium- and chloride-dependent betaine transporter (614 aa).

At M1–E44 the chain is on the cytoplasmic side. A run of 3 helical transmembrane segments spans residues F45–L65, A73–L92, and G117–L137. Residues A138–R210 are Extracellular-facing. N-linked (GlcNAc...) asparagine glycosylation is found at N171 and N183. The next 9 helical transmembrane spans lie at W211–W229, V238–I255, I291–Y308, I320–L341, M374–L393, L423–T441, G458–A478, I499–S518, and I538–I556. Residues T557–L614 are Cytoplasmic-facing. The segment at T574–P600 is disordered. S586 bears the Phosphoserine mark. Positions Q588–P600 are enriched in polar residues.

The protein belongs to the sodium:neurotransmitter symporter (SNF) (TC 2.A.22) family. SLC6A12 subfamily. Interacts with LIN7C.

It is found in the basolateral cell membrane. It localises to the cell membrane. The catalysed reaction is 4-aminobutanoate(out) + chloride(out) + 3 Na(+)(out) = 4-aminobutanoate(in) + chloride(in) + 3 Na(+)(in). It carries out the reaction glycine betaine(out) + 2 chloride(out) + 3 Na(+)(out) = glycine betaine(in) + 2 chloride(in) + 3 Na(+)(in). In terms of biological role, transporter that mediates cellular uptake of betaine and GABA in a sodium- and chloride-dependent process. May have a role in regulation of GABAergic transmission in the brain through the reuptake of GABA into presynaptic terminals, as well as in osmotic regulation. Probably also involved in renal and hepatic osmotic regulation. The chain is Sodium- and chloride-dependent betaine transporter (Slc6a12) from Rattus norvegicus (Rat).